The following is a 458-amino-acid chain: Argininosuccinate lyase (458 aa).

Belongs to the lyase 1 family. Argininosuccinate lyase subfamily.

The protein resides in the cytoplasm. It carries out the reaction 2-(N(omega)-L-arginino)succinate = fumarate + L-arginine. It participates in amino-acid biosynthesis; L-arginine biosynthesis; L-arginine from L-ornithine and carbamoyl phosphate: step 3/3. The sequence is that of Argininosuccinate lyase from Salmonella paratyphi B (strain ATCC BAA-1250 / SPB7).